The chain runs to 210 residues: ATP phosphoribosyltransferase (210 aa).

Belongs to the ATP phosphoribosyltransferase family. Short subfamily. Heteromultimer composed of HisG and HisZ subunits.

Its subcellular location is the cytoplasm. The enzyme catalyses 1-(5-phospho-beta-D-ribosyl)-ATP + diphosphate = 5-phospho-alpha-D-ribose 1-diphosphate + ATP. Its pathway is amino-acid biosynthesis; L-histidine biosynthesis; L-histidine from 5-phospho-alpha-D-ribose 1-diphosphate: step 1/9. Catalyzes the condensation of ATP and 5-phosphoribose 1-diphosphate to form N'-(5'-phosphoribosyl)-ATP (PR-ATP). Has a crucial role in the pathway because the rate of histidine biosynthesis seems to be controlled primarily by regulation of HisG enzymatic activity. The sequence is that of ATP phosphoribosyltransferase (hisG) from Synechocystis sp. (strain ATCC 27184 / PCC 6803 / Kazusa).